The sequence spans 134 residues: Small ribosomal subunit protein uS11 (134 aa).

It belongs to the universal ribosomal protein uS11 family. In terms of assembly, part of the 30S ribosomal subunit. Interacts with proteins S7 and S18. Binds to IF-3.

Functionally, located on the platform of the 30S subunit, it bridges several disparate RNA helices of the 16S rRNA. Forms part of the Shine-Dalgarno cleft in the 70S ribosome. In Leptothrix cholodnii (strain ATCC 51168 / LMG 8142 / SP-6) (Leptothrix discophora (strain SP-6)), this protein is Small ribosomal subunit protein uS11.